Reading from the N-terminus, the 159-residue chain is ATP synthase subunit b (159 aa).

The helical transmembrane segment at 2–22 threads the bilayer; that stretch reads NISIPQIIAAILNFIILLLIV.

The protein belongs to the ATPase B chain family. F-type ATPases have 2 components, F(1) - the catalytic core - and F(0) - the membrane proton channel. F(1) has five subunits: alpha(3), beta(3), gamma(1), delta(1), epsilon(1). F(0) has three main subunits: a(1), b(2) and c(10-14). The alpha and beta chains form an alternating ring which encloses part of the gamma chain. F(1) is attached to F(0) by a central stalk formed by the gamma and epsilon chains, while a peripheral stalk is formed by the delta and b chains.

Its subcellular location is the cell membrane. Functionally, f(1)F(0) ATP synthase produces ATP from ADP in the presence of a proton or sodium gradient. F-type ATPases consist of two structural domains, F(1) containing the extramembraneous catalytic core and F(0) containing the membrane proton channel, linked together by a central stalk and a peripheral stalk. During catalysis, ATP synthesis in the catalytic domain of F(1) is coupled via a rotary mechanism of the central stalk subunits to proton translocation. In terms of biological role, component of the F(0) channel, it forms part of the peripheral stalk, linking F(1) to F(0). The sequence is that of ATP synthase subunit b from Clostridium botulinum (strain ATCC 19397 / Type A).